Consider the following 130-residue polypeptide: Anti-adapter protein IraD (130 aa).

The protein belongs to the GpW/Gp25 family. IraD subfamily. In terms of assembly, interacts with RssB.

The protein resides in the cytoplasm. Functionally, inhibits RpoS proteolysis by regulating RssB activity, thereby increasing the stability of the sigma stress factor RpoS during oxidative stress. Its effect on RpoS stability is due to its interaction with RssB, which probably blocks the interaction of RssB with RpoS, and the consequent delivery of the RssB-RpoS complex to the ClpXP protein degradation pathway. The chain is Anti-adapter protein IraD from Escherichia coli O157:H7.